We begin with the raw amino-acid sequence, 300 residues long: Nuclear egress protein 1 (300 aa).

A CCCH-type zinc finger spans residues 90–217 (CLSLSGMGYY…YIVFPGKALH (128 aa)).

Belongs to the herpesviridae NEC1 protein family. Forms a heterohexameric complex with NEC2. Interacts with capsid vertex specific component 2/CVC2; this interaction directs the capsid to the host inner nuclear membrane to initiate budding. In terms of processing, phosphorylated at serine residues in the N-terminus. This phosphorylation regulates the localization within the inner nuclear membrane.

It is found in the host nucleus inner membrane. Its function is as follows. Plays an essential role in virion nuclear egress, the first step of virion release from infected cell. Within the host nucleus, NEC1 interacts with the newly formed capsid through the vertexes and directs it to the inner nuclear membrane by associating with NEC2. Induces the budding of the capsid at the inner nuclear membrane as well as its envelopment into the perinuclear space. There, the NEC1/NEC2 complex promotes the fusion of the enveloped capsid with the outer nuclear membrane and the subsequent release of the viral capsid into the cytoplasm where it will reach the secondary budding sites in the host Golgi or trans-Golgi network. The sequence is that of Nuclear egress protein 1 from Gallid herpesvirus 2 (strain Chicken/Md5/ATCC VR-987) (GaHV-2).